The following is a 163-amino-acid chain: UPF0763 protein C8J_0930 (163 aa).

It belongs to the UPF0763 family.

This chain is UPF0763 protein C8J_0930, found in Campylobacter jejuni subsp. jejuni serotype O:6 (strain 81116 / NCTC 11828).